The sequence spans 253 residues: Triosephosphate isomerase (253 aa).

9-11 is a binding site for substrate; the sequence is NWK. The active-site Electrophile is histidine 97. Glutamate 169 acts as the Proton acceptor in catalysis. Substrate contacts are provided by residues glycine 175, serine 215, and 236–237; that span reads GG.

It belongs to the triosephosphate isomerase family. Homodimer.

It is found in the cytoplasm. The catalysed reaction is D-glyceraldehyde 3-phosphate = dihydroxyacetone phosphate. It functions in the pathway carbohydrate biosynthesis; gluconeogenesis. Its pathway is carbohydrate degradation; glycolysis; D-glyceraldehyde 3-phosphate from glycerone phosphate: step 1/1. Functionally, involved in the gluconeogenesis. Catalyzes stereospecifically the conversion of dihydroxyacetone phosphate (DHAP) to D-glyceraldehyde-3-phosphate (G3P). The protein is Triosephosphate isomerase of Staphylococcus aureus (strain NCTC 8325 / PS 47).